The sequence spans 297 residues: Cell division protein ZipA (297 aa).

Met1 is a topological domain (periplasmic). The helical transmembrane segment at 2-22 (EIGLREWLILIGIIVIAGILF) threads the bilayer. The Cytoplasmic segment spans residues 23-297 (DGWRRMRGGK…FERRALTQKR (275 aa)). A disordered region spans residues 48–150 (DEEGGSAEVL…GAAPASSSVK (103 aa)). Residues 83–92 (ARDREREPKP) show a composition bias toward basic and acidic residues. Positions 124–133 (LFADSDDDFA) are enriched in acidic residues. A compositionally biased stretch (polar residues) spans 136–149 (NNRSSGAAPASSSV).

This sequence belongs to the ZipA family. Interacts with FtsZ via their C-terminal domains.

The protein resides in the cell inner membrane. Essential cell division protein that stabilizes the FtsZ protofilaments by cross-linking them and that serves as a cytoplasmic membrane anchor for the Z ring. Also required for the recruitment to the septal ring of downstream cell division proteins. This is Cell division protein ZipA from Pseudomonas putida (strain ATCC 700007 / DSM 6899 / JCM 31910 / BCRC 17059 / LMG 24140 / F1).